The chain runs to 955 residues: UvrABC system protein A (955 aa).

ATP is bound at residue 35-42 (GLSGSGKS). 2 consecutive ABC transporter domains span residues 322 to 601 (WGST…EESI) and 621 to 951 (GHDN…RYLK). Residue 654–661 (GVSGSGKS) coordinates ATP. Residues 754–780 (CEACQGDGLIKIEMHFLPDVYVKCDIC) form a C4-type zinc finger.

The protein belongs to the ABC transporter superfamily. UvrA family. As to quaternary structure, forms a heterotetramer with UvrB during the search for lesions.

It localises to the cytoplasm. In terms of biological role, the UvrABC repair system catalyzes the recognition and processing of DNA lesions. UvrA is an ATPase and a DNA-binding protein. A damage recognition complex composed of 2 UvrA and 2 UvrB subunits scans DNA for abnormalities. When the presence of a lesion has been verified by UvrB, the UvrA molecules dissociate. The sequence is that of UvrABC system protein A from Rickettsia conorii (strain ATCC VR-613 / Malish 7).